The following is a 285-amino-acid chain: Bifunctional protein FolD (285 aa).

NADP(+) contacts are provided by residues 164-166 (GRS), serine 189, and isoleucine 230.

This sequence belongs to the tetrahydrofolate dehydrogenase/cyclohydrolase family. Homodimer.

The enzyme catalyses (6R)-5,10-methylene-5,6,7,8-tetrahydrofolate + NADP(+) = (6R)-5,10-methenyltetrahydrofolate + NADPH. It catalyses the reaction (6R)-5,10-methenyltetrahydrofolate + H2O = (6R)-10-formyltetrahydrofolate + H(+). It functions in the pathway one-carbon metabolism; tetrahydrofolate interconversion. Functionally, catalyzes the oxidation of 5,10-methylenetetrahydrofolate to 5,10-methenyltetrahydrofolate and then the hydrolysis of 5,10-methenyltetrahydrofolate to 10-formyltetrahydrofolate. In Oceanobacillus iheyensis (strain DSM 14371 / CIP 107618 / JCM 11309 / KCTC 3954 / HTE831), this protein is Bifunctional protein FolD.